The sequence spans 959 residues: DEAD-box ATP-dependent RNA helicase rde-12 (959 aa).

The segment at 1 to 336 (MSSFGNNAGG…EGVNAPVRAP (336 aa)) is disordered. Positions 71 to 97 (GRREDDRSHSRDNHGGSRYGERDDRGN) are enriched in basic and acidic residues. A compositionally biased stretch (polar residues) spans 98 to 118 (NGRSADNRYSQSNYNYDSNRG). Basic and acidic residues predominate over residues 122–134 (YQRDNHGSKDDRG). Residues 137–160 (NQYNDHGSNHNSNSRNDQYRQGSY) are compositionally biased toward polar residues. 2 stretches are compositionally biased toward basic and acidic residues: residues 166–181 (SGYRRDDDRRRNDNDQ) and 189–201 (RDSDRNSPRDHHN). The span at 202–213 (YNSQSSPRSHQG) shows a compositional bias: polar residues. Basic and acidic residues-rich tracts occupy residues 219–239 (SAPKEDNQRRYDNHQGGHDSY) and 255–270 (YRNDYRSQQDSRDHRS). Residues 271–280 (GGNNSSSGFK) are compositionally biased toward low complexity. Gly residues predominate over residues 281–301 (NDGGFGGNDNRGFGNNGGGSF). Residues 302–317 (GNPNNSYRGNSNNIGG) show a composition bias toward low complexity. A Q motif motif is present at residues 380–408 (TSWTNSGLHPTILETLKRIKYNNVRTIQG). One can recognise a Helicase ATP-binding domain in the interval 411–599 (IPQVLDGHDV…NELMKRLPGQ (189 aa)). An ATP-binding site is contributed by 424-431 (AETSAGKT). The short motif at 539–542 (DEAD) is the DEAD box element. Positions 632-792 (KLREILKQNV…KVPDFLDAMA (161 aa)) constitute a Helicase C-terminal domain. 2 disordered regions span residues 793-834 (KSSR…GGGR) and 858-959 (GGGG…DDEW). 2 stretches are compositionally biased toward gly residues: residues 800–834 (GTSGFGQRGGYGGRGGGFGGTGRGRGGGVFGGGGR) and 858–872 (GGGGFGGVKPSGFGG). The segment covering 930–941 (TLGSSTFGTANN) has biased composition (polar residues). A compositionally biased stretch (acidic residues) spans 942–959 (ADEEPTETGADGNDDDEW).

The protein belongs to the DEAD box helicase family. DDX3/DED1 subfamily. In terms of assembly, interacts with wago-1, ergo-1 and rde-1. Mg(2+) is required as a cofactor. As to expression, expressed in the soma and germline.

It localises to the cytoplasm. The protein localises to the perinuclear region. The protein resides in the cytoplasmic granule. It is found in the P-body. It catalyses the reaction ATP + H2O = ADP + phosphate + H(+). In terms of biological role, probable ATP-dependent RNA helicase involved in RNAi-mediated gene silencing. Specifically required in the endogenous siRNA pathway for biogenesis of secondary endogenous small interfering RNA (siRNA) intermediates called 22G-RNAs. May associate with and recruit rde-10 to primary siRNA-targeted mRNA for secondary siRNA synthesis. May be recruited to target mRNAs by rde-1 and/or ergo-1. The polypeptide is DEAD-box ATP-dependent RNA helicase rde-12 (Caenorhabditis elegans).